The following is a 399-amino-acid chain: Argininosuccinate synthase (399 aa).

8–16 (AYSGGLDTS) is a binding site for ATP. Y87 provides a ligand contact to L-citrulline. ATP is bound at residue G117. L-aspartate-binding residues include T119, N123, and D124. N123 provides a ligand contact to L-citrulline. L-citrulline-binding residues include R127, S175, E260, and Y272.

It belongs to the argininosuccinate synthase family. Type 1 subfamily. Homotetramer.

It localises to the cytoplasm. The enzyme catalyses L-citrulline + L-aspartate + ATP = 2-(N(omega)-L-arginino)succinate + AMP + diphosphate + H(+). It functions in the pathway amino-acid biosynthesis; L-arginine biosynthesis; L-arginine from L-ornithine and carbamoyl phosphate: step 2/3. This Rhodococcus erythropolis (strain PR4 / NBRC 100887) protein is Argininosuccinate synthase.